The sequence spans 865 residues: LINE-1 type transposase domain-containing protein 1 (865 aa).

Position 2 is an N-acetylserine (S2). Residue S2 is modified to Phosphoserine. Position 149 is a phosphothreonine (T149). Phosphoserine is present on S154. Residues 370 to 508 are disordered; that stretch reads EMKNLETQEE…EKKASRRQKE (139 aa). 2 stretches are compositionally biased toward acidic residues: residues 376 to 440 and 472 to 483; these read TQEE…EQTS and SVEDSESEEEEE. S472, S476, and S478 each carry phosphoserine. Basic and acidic residues predominate over residues 498-508; the sequence is TEKKASRRQKE. Phosphoserine occurs at positions 518, 561, and 573. The segment covering 590–608 has biased composition (basic and acidic residues); that stretch reads EEKKHRTLHTEELTSKEAD. Residues 590 to 612 are disordered; that stretch reads EEKKHRTLHTEELTSKEADLTEE. Phosphoserine occurs at positions 640, 648, and 665. Residues 642-684 adopt a coiled-coil conformation; that stretch reads VLEIENSVDDLSSRMDILEERIDSLEDQIEEFSKDTMQMTKQI.

This sequence belongs to the transposase 22 family.

This chain is LINE-1 type transposase domain-containing protein 1 (L1TD1), found in Homo sapiens (Human).